We begin with the raw amino-acid sequence, 212 residues long: Ribonuclease HII (212 aa).

Residues 28-212 (SLIAGIDEVG…KSFAPVRQVF (185 aa)) form the RNase H type-2 domain. A divalent metal cation is bound by residues D34, E35, and D127.

The protein belongs to the RNase HII family. It depends on Mn(2+) as a cofactor. Mg(2+) serves as cofactor.

It localises to the cytoplasm. The enzyme catalyses Endonucleolytic cleavage to 5'-phosphomonoester.. Endonuclease that specifically degrades the RNA of RNA-DNA hybrids. This chain is Ribonuclease HII, found in Chlamydia abortus (strain DSM 27085 / S26/3) (Chlamydophila abortus).